Here is a 192-residue protein sequence, read N- to C-terminus: Ras-like protein RAS2 (192 aa).

15 to 22 (GGGGVGKS) provides a ligand contact to GTP. The Effector region motif lies at 37-45 (YDPTIEDSY). GTP-binding positions include 62-66 (DTAGQ) and 121-124 (NKSD). At Cys189 the chain carries Cysteine methyl ester. Cys189 carries S-geranylgeranyl cysteine lipidation. Residues 190–192 (IVL) constitute a propeptide, removed in mature form.

It belongs to the small GTPase superfamily. Ras family.

The protein localises to the cell membrane. The catalysed reaction is GTP + H2O = GDP + phosphate + H(+). Its activity is regulated as follows. Alternates between an inactive form bound to GDP and an active form bound to GTP. Activated by a guanine nucleotide-exchange factor (GEF) and inactivated by a GTPase-activating protein (GAP). Ras proteins bind GDP/GTP and possess intrinsic GTPase activity. The sequence is that of Ras-like protein RAS2 (RAS2) from Hydra vulgaris (Hydra).